The sequence spans 360 residues: Peptide chain release factor 1 (360 aa).

N5-methylglutamine is present on glutamine 235. Positions 284–295 (ERQEQAQADTRR) are enriched in basic and acidic residues. The disordered stretch occupies residues 284-309 (ERQEQAQADTRRNLLGSGDRSDKIRT).

It belongs to the prokaryotic/mitochondrial release factor family. Methylated by PrmC. Methylation increases the termination efficiency of RF1.

It localises to the cytoplasm. Functionally, peptide chain release factor 1 directs the termination of translation in response to the peptide chain termination codons UAG and UAA. The protein is Peptide chain release factor 1 (prfA) of Pasteurella multocida (strain Pm70).